The primary structure comprises 50 residues: Small nuclear ribonucleoprotein Sm D2 (50 aa).

The disordered stretch occupies residues Met-1 to Xaa-36. Ser-2 is subject to N-acetylserine. Residues Lys-6 and Lys-8 each participate in a glycyl lysine isopeptide (Lys-Gly) (interchain with G-Cter in SUMO2) cross-link. Over residues Pro-7–Glu-21 the composition is skewed to basic and acidic residues. Phosphoserine is present on Ser-9. A Phosphothreonine modification is found at Thr-12.

This sequence belongs to the snRNP core protein family. In terms of assembly, core component of the spliceosomal U1, U2, U4 and U5 small nuclear ribonucleoproteins (snRNPs), the building blocks of the spliceosome. Most spliceosomal snRNPs contain a common set of Sm proteins, SNRPB, SNRPD1, SNRPD2, SNRPD3, SNRPE, SNRPF and SNRPG that assemble in a heptameric protein ring on the Sm site of the small nuclear RNA to form the core snRNP. Component of the U1 snRNP. The U1 snRNP is composed of the U1 snRNA and the 7 core Sm proteins SNRPB, SNRPD1, SNRPD2, SNRPD3, SNRPE, SNRPF and SNRPG, and at least three U1 snRNP-specific proteins SNRNP70/U1-70K, SNRPA/U1-A and SNRPC/U1-C. Component of the U4/U6-U5 tri-snRNP complex composed of the U4, U6 and U5 snRNAs and at least PRPF3, PRPF4, PRPF6, PRPF8, PRPF31, SNRNP200, TXNL4A, SNRNP40, SNRPB, SNRPD1, SNRPD2, SNRPD3, SNRPE, SNRPF, SNRPG, DDX23, CD2BP2, PPIH, SNU13, EFTUD2, SART1 and USP39, plus LSM2, LSM3, LSM4, LSM5, LSM6, LSM7 and LSM8. Component of the minor spliceosome, which splices U12-type introns. Part of the SMN-Sm complex that contains SMN1, GEMIN2/SIP1, DDX20/GEMIN3, GEMIN4, GEMIN5, GEMIN6, GEMIN7, GEMIN8, STRAP/UNRIP and the Sm proteins SNRPB, SNRPD1, SNRPD2, SNRPD3, SNRPE, SNRPF and SNRPG; catalyzes core snRNPs assembly. Forms a 6S pICln-Sm complex composed of CLNS1A/pICln, SNRPD1, SNRPD2, SNRPE, SNRPF and SNRPG; ring-like structure where CLNS1A/pICln mimics additional Sm proteins and which is unable to assemble into the core snRNP. Interacts with SMN1; the interaction is direct. Interacts with GEMIN2; the interaction is direct. Interacts with SNRPD1; the interaction is direct. Interacts with SNRPF; the interaction is direct.

The protein resides in the cytoplasm. The protein localises to the cytosol. It localises to the nucleus. In terms of biological role, plays a role in pre-mRNA splicing as a core component of the spliceosomal U1, U2, U4 and U5 small nuclear ribonucleoproteins (snRNPs), the building blocks of the spliceosome. Component of both the pre-catalytic spliceosome B complex and activated spliceosome C complexes. As a component of the minor spliceosome, involved in the splicing of U12-type introns in pre-mRNAs. The chain is Small nuclear ribonucleoprotein Sm D2 (SNRPD2) from Sus scrofa (Pig).